We begin with the raw amino-acid sequence, 320 residues long: Biotin synthase (320 aa).

A Radical SAM core domain is found at 39-267; that stretch reads NAIQLATLLS…KARVRLSAGR (229 aa). The [4Fe-4S] cluster site is built by Cys-54, Cys-58, and Cys-61. [2Fe-2S] cluster-binding residues include Cys-98, Cys-130, Cys-190, and Arg-262.

This sequence belongs to the radical SAM superfamily. Biotin synthase family. In terms of assembly, homodimer. [4Fe-4S] cluster is required as a cofactor. [2Fe-2S] cluster serves as cofactor.

The enzyme catalyses (4R,5S)-dethiobiotin + (sulfur carrier)-SH + 2 reduced [2Fe-2S]-[ferredoxin] + 2 S-adenosyl-L-methionine = (sulfur carrier)-H + biotin + 2 5'-deoxyadenosine + 2 L-methionine + 2 oxidized [2Fe-2S]-[ferredoxin]. The protein operates within cofactor biosynthesis; biotin biosynthesis; biotin from 7,8-diaminononanoate: step 2/2. Its function is as follows. Catalyzes the conversion of dethiobiotin (DTB) to biotin by the insertion of a sulfur atom into dethiobiotin via a radical-based mechanism. This chain is Biotin synthase, found in Synechococcus elongatus (strain ATCC 33912 / PCC 7942 / FACHB-805) (Anacystis nidulans R2).